Here is a 99-residue protein sequence, read N- to C-terminus: uncharacterized protein (99 aa).

A coiled-coil region spans residues 43–95 (ENEEIYADQVRRIKLRLRELRETYATSEDNWRELMDNLEELRDQIERLAIRGG).

This is an uncharacterized protein from Archaeoglobus fulgidus (strain ATCC 49558 / DSM 4304 / JCM 9628 / NBRC 100126 / VC-16).